The chain runs to 213 residues: UPF0319 protein HAPS_0727 (213 aa).

A signal peptide spans 1–21; the sequence is MKLGKIALAMTALIAGTTAFA.

It belongs to the UPF0319 family.

In Glaesserella parasuis serovar 5 (strain SH0165) (Haemophilus parasuis), this protein is UPF0319 protein HAPS_0727.